The primary structure comprises 70 residues: ATP synthase subunit c (70 aa).

2 helical membrane-spanning segments follow: residues 3–23 (ALAAGIAMLAGLGVGIGIGIA) and 44–64 (LFFIGAALAEAVAIYSFVIAI).

It belongs to the ATPase C chain family. F-type ATPases have 2 components, F(1) - the catalytic core - and F(0) - the membrane proton channel. F(1) has five subunits: alpha(3), beta(3), gamma(1), delta(1), epsilon(1). F(0) has three main subunits: a(1), b(2) and c(10-14). The alpha and beta chains form an alternating ring which encloses part of the gamma chain. F(1) is attached to F(0) by a central stalk formed by the gamma and epsilon chains, while a peripheral stalk is formed by the delta and b chains.

The protein resides in the cell membrane. Its function is as follows. F(1)F(0) ATP synthase produces ATP from ADP in the presence of a proton or sodium gradient. F-type ATPases consist of two structural domains, F(1) containing the extramembraneous catalytic core and F(0) containing the membrane proton channel, linked together by a central stalk and a peripheral stalk. During catalysis, ATP synthesis in the catalytic domain of F(1) is coupled via a rotary mechanism of the central stalk subunits to proton translocation. Key component of the F(0) channel; it plays a direct role in translocation across the membrane. A homomeric c-ring of between 10-14 subunits forms the central stalk rotor element with the F(1) delta and epsilon subunits. This chain is ATP synthase subunit c, found in Caldicellulosiruptor saccharolyticus (strain ATCC 43494 / DSM 8903 / Tp8T 6331).